The sequence spans 255 residues: tRNA uridine(34) hydroxylase (255 aa).

One can recognise a Rhodanese domain in the interval 125 to 219 (ATPDTILLDV…YLEQIPESES (95 aa)). Cysteine 179 serves as the catalytic Cysteine persulfide intermediate.

The protein belongs to the TrhO family.

It carries out the reaction uridine(34) in tRNA + AH2 + O2 = 5-hydroxyuridine(34) in tRNA + A + H2O. Its function is as follows. Catalyzes oxygen-dependent 5-hydroxyuridine (ho5U) modification at position 34 in tRNAs. The sequence is that of tRNA uridine(34) hydroxylase from Nitrobacter winogradskyi (strain ATCC 25391 / DSM 10237 / CIP 104748 / NCIMB 11846 / Nb-255).